The sequence spans 386 residues: TGF-beta-activated kinase 1 and MAP3K7-binding protein 1 (386 aa).

One can recognise a PPM-type phosphatase domain in the interval 22–327; that stretch reads HSCRYSKQKN…EEMTVIYVKL (306 aa).

In terms of assembly, interacts with mom-4; the interaction enhances mom-4 kinase activity.

Involved in the Wnt signaling pathway by regulating mom-4 kinase activity. The chain is TGF-beta-activated kinase 1 and MAP3K7-binding protein 1 from Caenorhabditis elegans.